Here is a 494-residue protein sequence, read N- to C-terminus: Integrin beta-like protein 1 (494 aa).

A signal peptide spans 1–23 (MRPPGFRNFLLLASSLLFAGLSA). 40 disulfides stabilise this stretch: Cys-40/Cys-71, Cys-51/Cys-69, Cys-63/Cys-74, Cys-76/Cys-89, Cys-91/Cys-112, Cys-96/Cys-110, Cys-104/Cys-115, Cys-117/Cys-126, Cys-132/Cys-159, Cys-143/Cys-157, Cys-151/Cys-162, Cys-164/Cys-178, Cys-180/Cys-202, Cys-185/Cys-200, Cys-194/Cys-205, Cys-207/Cys-216, Cys-220/Cys-247, Cys-231/Cys-245, Cys-239/Cys-250, Cys-252/Cys-269, Cys-271/Cys-296, Cys-276/Cys-294, Cys-288/Cys-299, Cys-301/Cys-310, Cys-316/Cys-343, Cys-327/Cys-341, Cys-335/Cys-346, Cys-348/Cys-361, Cys-363/Cys-384, Cys-368/Cys-382, Cys-376/Cys-387, Cys-389/Cys-398, Cys-404/Cys-431, Cys-415/Cys-429, Cys-423/Cys-434, Cys-436/Cys-448, Cys-450/Cys-471, Cys-455/Cys-469, Cys-463/Cys-474, and Cys-476/Cys-485. I-EGF domains follow at residues 40-90 (CRLS…PLCE), 91-127 (CHEW…DACQ), 132-179 (CDLT…KFCE), 180-217 (CDDR…DKCE), 220-270 (CDIT…DTCE), 271-311 (CDER…KKCE), 316-362 (CTLS…KTCE), 363-399 (CDDR…KLCQ), 404-449 (CNMT…EFCD), and 450-486 (CDDR…NACE). An I repeat occupies 51-95 (CRAPGQPPGAALCHGRGRCDCGVCICHVTEPGMFFGPLCECHEWV). Positions 51-494 (CRAPGQPPGA…CEIWLGSEYP (444 aa)) are cysteine-rich tandem repeats. The II repeat unit spans residues 96–142 (CETYDGSTCAGHGKCDCGKCKCDQGWYGDACQYPTNCDLTKKKSNQM). The III repeat unit spans residues 143 to 184 (CKNSQDIICSNAGTCHCGRCKCDNSDGSGLVYGKFCECDDRE). An IV repeat occupies 185–230 (CIDDETEEICGGHGKCYCGNCYCKAGWHGDKCEFQCDITPWESKRR). One copy of the V repeat lies at 231-275 (CTSPDGKICSNRGTCVCGECTCHDVDPTGDWGDIHGDTCECDERD). The stretch at 276 to 326 (CRAVYDRYSDDFCSGHGQCNCGRCDCKAGWYGKKCEHPQSCTLSAEESIRK) is one VI repeat. The VII repeat unit spans residues 327-367 (CQGSSDLPCSGRGKCECGKCTCYPPGDRRVYGKTCECDDRR). One copy of the VIII repeat lies at 368-414 (CEDLDGVVCGGHGTCSCGRCVCERGWFGKLCQHPRKCNMTEEQSKNL). The N-linked (GlcNAc...) asparagine glycan is linked to Asn-405. The IX repeat unit spans residues 415–454 (CESADGILCSGKGSCHCGKCICSAEEWYISGEFCDCDDRD). One copy of the X repeat lies at 455-494 (CDKHDGLICTGNGICSCGNCECWDGWNGNACEIWLGSEYP).

As to expression, widely expressed in many tissues, but readily detectable only in aorta.

It is found in the secreted. This is Integrin beta-like protein 1 (ITGBL1) from Homo sapiens (Human).